The primary structure comprises 709 residues: ATP-binding cassette sub-family F member 3 (709 aa).

N-acetylalanine is present on alanine 2. A compositionally biased stretch (basic and acidic residues) spans 129–143; that stretch reads RLKAKQEKRSEKETL. Positions 129–171 are disordered; it reads RLKAKQEKRSEKETLKTSSPLVLEEASASQAGSRKESRLESSG. A phosphoserine mark is found at serine 155, serine 157, and serine 161. A compositionally biased stretch (basic and acidic residues) spans 161–171; that stretch reads SRKESRLESSG. ABC transporter domains lie at 178–424 and 492–707; these read VRIE…LNQQ and LQLD…RREG. 210-217 provides a ligand contact to ATP; sequence GRNGLGKT. Serine 283 is subject to Phosphoserine. 525–532 lines the ATP pocket; it reads GENGAGKS.

Belongs to the ABC transporter superfamily. ABCF family. EF3 subfamily.

Its function is as follows. Displays an antiviral effect against flaviviruses such as west Nile virus (WNV) in the presence of OAS1B. The protein is ATP-binding cassette sub-family F member 3 (Abcf3) of Rattus norvegicus (Rat).